A 1586-amino-acid chain; its full sequence is Pentafunctional AROM polypeptide (1586 aa).

Positions 1 to 384 are 3-dehydroquinate synthase; sequence MSEPTKISIL…HEPKASVVSN (384 aa). NAD(+) contacts are provided by residues 44–46, 81–84, 114–116, and Asp-119; these read DTN, ESSK, and GGV. Residue Arg-130 participates in 7-phospho-2-dehydro-3-deoxy-D-arabino-heptonate binding. 139-140 is an NAD(+) binding site; sequence TT. 2 residues coordinate 7-phospho-2-dehydro-3-deoxy-D-arabino-heptonate: Asp-146 and Lys-152. An NAD(+)-binding site is contributed by Lys-161. Asn-162 provides a ligand contact to 7-phospho-2-dehydro-3-deoxy-D-arabino-heptonate. NAD(+)-binding positions include 179-182 and Asn-190; that span reads FLET. Residue Glu-194 coordinates Zn(2+). 7-phospho-2-dehydro-3-deoxy-D-arabino-heptonate-binding positions include 194–197 and Lys-250; that span reads EVIK. Glu-260 serves as the catalytic Proton acceptor; for 3-dehydroquinate synthase activity. 7-phospho-2-dehydro-3-deoxy-D-arabino-heptonate contacts are provided by residues 264–268 and His-271; that span reads RNLLN. Position 271 (His-271) interacts with Zn(2+). The Proton acceptor; for 3-dehydroquinate synthase activity role is filled by His-275. Residues His-287 and Lys-356 each contribute to the 7-phospho-2-dehydro-3-deoxy-D-arabino-heptonate site. Zn(2+) is bound at residue His-287. The tract at residues 397-842 is EPSP synthase; that stretch reads VHPGVPKSLN…WDALKQMFSV (446 aa). Cys-824 functions as the For EPSP synthase activity in the catalytic mechanism. The segment at 864–1056 is shikimate kinase; the sequence is SASVFIIGMR…KKKKHSFFVS (193 aa). An ATP-binding site is contributed by 871–878; that stretch reads GMRGAGKT. The segment at 1057-1277 is 3-dehydroquinase; it reads LTLPDVEPSG…AAPGQLSAAE (221 aa). The Proton acceptor; for 3-dehydroquinate dehydratase activity role is filled by His-1180. Residue Lys-1208 is the Schiff-base intermediate with substrate; for 3-dehydroquinate dehydratase activity of the active site. The segment at 1290 to 1586 is shikimate dehydrogenase; that stretch reads AQKFAIFGSP…SKHLDYFLSF (297 aa).

It in the N-terminal section; belongs to the sugar phosphate cyclases superfamily. Dehydroquinate synthase family. The protein in the 2nd section; belongs to the EPSP synthase family. This sequence in the 3rd section; belongs to the shikimate kinase family. In the 4th section; belongs to the type-I 3-dehydroquinase family. It in the C-terminal section; belongs to the shikimate dehydrogenase family. Homodimer. Zn(2+) serves as cofactor.

The protein localises to the cytoplasm. The catalysed reaction is 7-phospho-2-dehydro-3-deoxy-D-arabino-heptonate = 3-dehydroquinate + phosphate. It catalyses the reaction 3-dehydroquinate = 3-dehydroshikimate + H2O. It carries out the reaction shikimate + NADP(+) = 3-dehydroshikimate + NADPH + H(+). The enzyme catalyses shikimate + ATP = 3-phosphoshikimate + ADP + H(+). The catalysed reaction is 3-phosphoshikimate + phosphoenolpyruvate = 5-O-(1-carboxyvinyl)-3-phosphoshikimate + phosphate. The protein operates within metabolic intermediate biosynthesis; chorismate biosynthesis; chorismate from D-erythrose 4-phosphate and phosphoenolpyruvate: step 2/7. It functions in the pathway metabolic intermediate biosynthesis; chorismate biosynthesis; chorismate from D-erythrose 4-phosphate and phosphoenolpyruvate: step 3/7. Its pathway is metabolic intermediate biosynthesis; chorismate biosynthesis; chorismate from D-erythrose 4-phosphate and phosphoenolpyruvate: step 4/7. It participates in metabolic intermediate biosynthesis; chorismate biosynthesis; chorismate from D-erythrose 4-phosphate and phosphoenolpyruvate: step 5/7. The protein operates within metabolic intermediate biosynthesis; chorismate biosynthesis; chorismate from D-erythrose 4-phosphate and phosphoenolpyruvate: step 6/7. The AROM polypeptide catalyzes 5 consecutive enzymatic reactions in prechorismate polyaromatic amino acid biosynthesis. This Penicillium rubens (strain ATCC 28089 / DSM 1075 / NRRL 1951 / Wisconsin 54-1255) (Penicillium chrysogenum) protein is Pentafunctional AROM polypeptide.